Reading from the N-terminus, the 206-residue chain is Pyrrolidone-carboxylate peptidase (206 aa).

Residues Glu-78, Cys-141, and His-165 contribute to the active site.

Belongs to the peptidase C15 family. As to quaternary structure, homotetramer.

The protein localises to the cytoplasm. It catalyses the reaction Release of an N-terminal pyroglutamyl group from a polypeptide, the second amino acid generally not being Pro.. In terms of biological role, removes 5-oxoproline from various penultimate amino acid residues except L-proline. The sequence is that of Pyrrolidone-carboxylate peptidase from Thermococcus kodakarensis (strain ATCC BAA-918 / JCM 12380 / KOD1) (Pyrococcus kodakaraensis (strain KOD1)).